The chain runs to 123 residues: Immunoglobulin lambda variable 5-45 (123 aa).

The N-terminal stretch at 1–19 is a signal peptide; sequence MAWTPLLLLFLSHCTGSLS. Residues 20-44 form a framework-1 region; it reads QAVLTQPSSLSASPGASASLTCTLC. In terms of domain architecture, Ig-like spans 20–123; sequence QAVLTQPSSL…YCMIWHSSAS (104 aa). The cysteines at positions 41 and 115 are disulfide-linked. The tract at residues 45-53 is complementarity-determining-1; the sequence is SGINVGTYR. Residues 54-70 are framework-2; it reads IYWYQQKPGSPPQYLLR. The tract at residues 68–92 is disordered; that stretch reads LLRYKSDSDKQQGSGVPSRFSGSKD. A complementarity-determining-2 region spans residues 71–77; the sequence is YKSDSDK. Positions 78-92 are enriched in polar residues; that stretch reads QQGSGVPSRFSGSKD. The interval 78 to 115 is framework-3; it reads QQGSGVPSRFSGSKDASANAGILLISGLQSEDEADYYC. Positions 116 to 123 are complementarity-determining-3; the sequence is MIWHSSAS.

In terms of assembly, immunoglobulins are composed of two identical heavy chains and two identical light chains; disulfide-linked.

It is found in the secreted. It localises to the cell membrane. In terms of biological role, v region of the variable domain of immunoglobulin light chains that participates in the antigen recognition. Immunoglobulins, also known as antibodies, are membrane-bound or secreted glycoproteins produced by B lymphocytes. In the recognition phase of humoral immunity, the membrane-bound immunoglobulins serve as receptors which, upon binding of a specific antigen, trigger the clonal expansion and differentiation of B lymphocytes into immunoglobulins-secreting plasma cells. Secreted immunoglobulins mediate the effector phase of humoral immunity, which results in the elimination of bound antigens. The antigen binding site is formed by the variable domain of one heavy chain, together with that of its associated light chain. Thus, each immunoglobulin has two antigen binding sites with remarkable affinity for a particular antigen. The variable domains are assembled by a process called V-(D)-J rearrangement and can then be subjected to somatic hypermutations which, after exposure to antigen and selection, allow affinity maturation for a particular antigen. This chain is Immunoglobulin lambda variable 5-45, found in Homo sapiens (Human).